Consider the following 141-residue polypeptide: Cytochrome c-type biogenesis protein CcmE (141 aa).

Residues 1–7 (MRARTRR) lie on the Cytoplasmic side of the membrane. Residues 8–28 (LYTFGIAAALIVAAAALAFFA) form a helical; Signal-anchor for type II membrane protein membrane-spanning segment. The Periplasmic portion of the chain corresponds to 29 to 141 (LRENANLFYT…RELKPLEAGG (113 aa)). Heme contacts are provided by His125 and Tyr129.

This sequence belongs to the CcmE/CycJ family.

It is found in the cell inner membrane. In terms of biological role, heme chaperone required for the biogenesis of c-type cytochromes. Transiently binds heme delivered by CcmC and transfers the heme to apo-cytochromes in a process facilitated by CcmF and CcmH. This chain is Cytochrome c-type biogenesis protein CcmE, found in Hyphomonas neptunium (strain ATCC 15444).